Consider the following 292-residue polypeptide: NAD kinase (292 aa).

Aspartate 73 acts as the Proton acceptor in catalysis. Residues 73-74 (DG), 147-148 (NE), histidine 158, arginine 175, aspartate 177, 188-193 (TAYSLS), and glutamine 247 each bind NAD(+).

Belongs to the NAD kinase family. Requires a divalent metal cation as cofactor.

The protein resides in the cytoplasm. The catalysed reaction is NAD(+) + ATP = ADP + NADP(+) + H(+). Involved in the regulation of the intracellular balance of NAD and NADP, and is a key enzyme in the biosynthesis of NADP. Catalyzes specifically the phosphorylation on 2'-hydroxyl of the adenosine moiety of NAD to yield NADP. The polypeptide is NAD kinase (Sodalis glossinidius (strain morsitans)).